A 585-amino-acid polypeptide reads, in one-letter code: Bestrophin-1 (585 aa).

The Cytoplasmic segment spans residues 1–31 (MTITYTSQVANARLGSFSRLLLCWRGSIYKL). A10 lines the Ca(2+) pocket. Residues 32–51 (LYGEFLIFLLCYYIIRFIYR) traverse the membrane as a helical segment. Topologically, residues 52–60 (LALTEEQQL) are extracellular. Residues 61–82 (MFEKLTLYCDSYIQLIPISFVL) traverse the membrane as a helical segment. The Cytoplasmic segment spans residues 83–237 (GFYVTLVVTR…DWISIPLVYT (155 aa)). A helical transmembrane segment spans residues 238–255 (QVVTVAVYSFFLTCLVGR). The Extracellular portion of the chain corresponds to 256–274 (QFLNPAKAYPGHELDLVVP). A helical transmembrane segment spans residues 275 to 288 (VFTFLQFFFYVGWL). Over 289–585 (KVAEQLINPF…ALENRDEAHS (297 aa)) the chain is Cytoplasmic. Q293, N296, D301, and D304 together coordinate Ca(2+). Residues 346 to 379 (PYTAASAQFRRASFMGSTFNISLNKEEMEFQPNQ) form an auto-inhibitory segment region.

It belongs to the anion channel-forming bestrophin (TC 1.A.46) family. Calcium-sensitive chloride channel subfamily. In terms of assembly, interacts with YWHAG; this interaction promotes the ligand-gated L-glutamate channel activity leading to the positive regulation of NMDA glutamate receptor activity through the L-glutamate secretion. Predominantly expressed in the basolateral membrane of the retinal pigment epithelium.

Its subcellular location is the cell membrane. The protein localises to the basolateral cell membrane. The enzyme catalyses chloride(in) = chloride(out). The catalysed reaction is hydrogencarbonate(in) = hydrogencarbonate(out). It carries out the reaction 4-aminobutanoate(in) = 4-aminobutanoate(out). It catalyses the reaction L-glutamate(out) = L-glutamate(in). Inactivated by sulfhydryl-reactive agents. Its function is as follows. Ligand-gated anion channel that allows the movement of anions across cell membranes when activated by calcium (Ca2+). Allows the movement of chloride and hydrogencarbonate. Found in a partially open conformation leading to significantly smaller chloride movement. Upon F2R/PAR-1 activation, the sequestered calcium is released into the cytosol of astrocytes, leading to the (Ca2+)-dependent release of L-glutamate into the synaptic cleft that targets the neuronal postsynaptic GRIN2A/NMDAR receptor resulting in the synaptic plasticity regulation. Upon activation of the norepinephrine-alpha-1 adrenergic receptor signaling pathway, transports as well D-serine than L-glutamate in a (Ca2+)-dependent manner, leading to activation of adjacent NMDAR receptors and therefore regulates the heterosynaptic long-term depression and metaplasticity during initial memory acquisition. Releases the 4-aminobutanoate neurotransmitter in a (Ca2+)-dependent manner, and participates in its tonic release from cerebellar glial cells. This chain is Bestrophin-1, found in Homo sapiens (Human).